Reading from the N-terminus, the 210-residue chain is Glutathione S-transferase 4 (210 aa).

Residues 1-80 (MDFYYLPLSA…YLVEKYGKQD (80 aa)) enclose the GST N-terminal domain. Residues serine 9, 50–52 (HTI), and 64–66 (ESR) contribute to the glutathione site. The GST C-terminal domain occupies 87-208 (CPKKRALINQ…AGALEMKTLI (122 aa)).

This sequence belongs to the GST superfamily. Theta family. In terms of assembly, homodimer.

The enzyme catalyses RX + glutathione = an S-substituted glutathione + a halide anion + H(+). Functionally, conjugation of reduced glutathione to a wide number of exogenous and endogenous hydrophobic electrophiles. The protein is Glutathione S-transferase 4 (Gst4) of Musca domestica (House fly).